The chain runs to 314 residues: Aspartate carbamoyltransferase catalytic subunit (314 aa).

Carbamoyl phosphate-binding residues include Arg53 and Thr54. Lys82 serves as a coordination point for L-aspartate. 3 residues coordinate carbamoyl phosphate: Arg103, His131, and Gln134. L-aspartate-binding residues include Arg164 and Arg230. Carbamoyl phosphate is bound by residues Leu267 and Pro268.

It belongs to the aspartate/ornithine carbamoyltransferase superfamily. ATCase family. Heterooligomer of catalytic and regulatory chains.

It carries out the reaction carbamoyl phosphate + L-aspartate = N-carbamoyl-L-aspartate + phosphate + H(+). The protein operates within pyrimidine metabolism; UMP biosynthesis via de novo pathway; (S)-dihydroorotate from bicarbonate: step 2/3. In terms of biological role, catalyzes the condensation of carbamoyl phosphate and aspartate to form carbamoyl aspartate and inorganic phosphate, the committed step in the de novo pyrimidine nucleotide biosynthesis pathway. This Methanococcus aeolicus (strain ATCC BAA-1280 / DSM 17508 / OCM 812 / Nankai-3) protein is Aspartate carbamoyltransferase catalytic subunit.